Reading from the N-terminus, the 424-residue chain is GTPase Obg (424 aa).

Positions Ala-2–Leu-158 constitute an Obg domain. The region spanning Ser-159–Glu-326 is the OBG-type G domain. GTP-binding positions include Gly-165–Ser-172, Phe-190–Val-194, Asp-211–Gly-214, Asn-280–Asp-283, and Ser-307–Leu-309. Residues Ser-172 and Thr-192 each contribute to the Mg(2+) site. The OCT domain maps to Lys-344–Glu-422.

The protein belongs to the TRAFAC class OBG-HflX-like GTPase superfamily. OBG GTPase family. In terms of assembly, monomer. It depends on Mg(2+) as a cofactor.

It localises to the cytoplasm. In terms of biological role, an essential GTPase which binds GTP, GDP and possibly (p)ppGpp with moderate affinity, with high nucleotide exchange rates and a fairly low GTP hydrolysis rate. Plays a role in control of the cell cycle, stress response, ribosome biogenesis and in those bacteria that undergo differentiation, in morphogenesis control. This is GTPase Obg from Mycoplasmopsis synoviae (strain 53) (Mycoplasma synoviae).